A 61-amino-acid chain; its full sequence is Large ribosomal subunit protein bL28 (61 aa).

This sequence belongs to the bacterial ribosomal protein bL28 family.

This chain is Large ribosomal subunit protein bL28, found in Geobacillus sp. (strain WCH70).